The following is a 725-amino-acid chain: Probable dipeptidyl-peptidase 5 (725 aa).

Positions 1–18 are cleaved as a signal peptide; the sequence is MGALRWLSIAATASTALA. N-linked (GlcNAc...) asparagine glycosylation is found at asparagine 75, asparagine 96, asparagine 153, asparagine 258, asparagine 383, and asparagine 453. Catalysis depends on serine 563, which acts as the Charge relay system. Asparagine 610 carries an N-linked (GlcNAc...) asparagine glycan. Residues aspartate 646 and histidine 678 each act as charge relay system in the active site.

Belongs to the peptidase S9C family.

The protein localises to the secreted. In terms of biological role, extracellular dipeptidyl-peptidase which removes N-terminal dipeptides sequentially from polypeptides having unsubstituted N-termini. This chain is Probable dipeptidyl-peptidase 5 (dpp5), found in Aspergillus flavus (strain ATCC 200026 / FGSC A1120 / IAM 13836 / NRRL 3357 / JCM 12722 / SRRC 167).